Reading from the N-terminus, the 123-residue chain is S-adenosylmethionine decarboxylase proenzyme 2 (123 aa).

The Schiff-base intermediate with substrate; via pyruvic acid role is filled by Ser65. Ser65 is modified (pyruvic acid (Ser); by autocatalysis). The Proton acceptor; for processing activity role is filled by His70. Catalysis depends on Cys85, which acts as the Proton donor; for catalytic activity.

It belongs to the prokaryotic AdoMetDC family. Type 1 subfamily. Heterotetramer of two alpha and two beta chains arranged as a dimer of alpha/beta heterodimers. Requires pyruvate as cofactor. Is synthesized initially as an inactive proenzyme. Formation of the active enzyme involves a self-maturation process in which the active site pyruvoyl group is generated from an internal serine residue via an autocatalytic post-translational modification. Two non-identical subunits are generated from the proenzyme in this reaction, and the pyruvate is formed at the N-terminus of the alpha chain, which is derived from the carboxyl end of the proenzyme. The post-translation cleavage follows an unusual pathway, termed non-hydrolytic serinolysis, in which the side chain hydroxyl group of the serine supplies its oxygen atom to form the C-terminus of the beta chain, while the remainder of the serine residue undergoes an oxidative deamination to produce ammonia and the pyruvoyl group blocking the N-terminus of the alpha chain.

The catalysed reaction is S-adenosyl-L-methionine + H(+) = S-adenosyl 3-(methylsulfanyl)propylamine + CO2. Its pathway is amine and polyamine biosynthesis; S-adenosylmethioninamine biosynthesis; S-adenosylmethioninamine from S-adenosyl-L-methionine: step 1/1. Functionally, catalyzes the decarboxylation of S-adenosylmethionine to S-adenosylmethioninamine (dcAdoMet), the propylamine donor required for the synthesis of the polyamines spermine and spermidine from the diamine putrescine. This is S-adenosylmethionine decarboxylase proenzyme 2 from Bacillus cereus (strain ATCC 14579 / DSM 31 / CCUG 7414 / JCM 2152 / NBRC 15305 / NCIMB 9373 / NCTC 2599 / NRRL B-3711).